Reading from the N-terminus, the 429-residue chain is Enolase 1 (429 aa).

Glutamine 163 is a (2R)-2-phosphoglycerate binding site. Residue glutamate 205 is the Proton donor of the active site. Mg(2+)-binding residues include aspartate 242, glutamate 287, and aspartate 314. Lysine 339, arginine 368, serine 369, and lysine 390 together coordinate (2R)-2-phosphoglycerate. Lysine 339 (proton acceptor) is an active-site residue.

The protein belongs to the enolase family. It depends on Mg(2+) as a cofactor.

The protein localises to the cytoplasm. It is found in the secreted. It localises to the cell surface. The catalysed reaction is (2R)-2-phosphoglycerate = phosphoenolpyruvate + H2O. It participates in carbohydrate degradation; glycolysis; pyruvate from D-glyceraldehyde 3-phosphate: step 4/5. Catalyzes the reversible conversion of 2-phosphoglycerate (2-PG) into phosphoenolpyruvate (PEP). It is essential for the degradation of carbohydrates via glycolysis. The sequence is that of Enolase 1 from Cupriavidus metallidurans (strain ATCC 43123 / DSM 2839 / NBRC 102507 / CH34) (Ralstonia metallidurans).